Here is a 171-residue protein sequence, read N- to C-terminus: Adenine phosphoribosyltransferase (171 aa).

The protein belongs to the purine/pyrimidine phosphoribosyltransferase family. In terms of assembly, homodimer.

Its subcellular location is the cytoplasm. It catalyses the reaction AMP + diphosphate = 5-phospho-alpha-D-ribose 1-diphosphate + adenine. It participates in purine metabolism; AMP biosynthesis via salvage pathway; AMP from adenine: step 1/1. In terms of biological role, catalyzes a salvage reaction resulting in the formation of AMP, that is energically less costly than de novo synthesis. This chain is Adenine phosphoribosyltransferase, found in Natranaerobius thermophilus (strain ATCC BAA-1301 / DSM 18059 / JW/NM-WN-LF).